A 262-amino-acid chain; its full sequence is Putative protein-methionine-sulfoxide reductase subunit YedZ1 (262 aa).

Belongs to the MsrP family.

Part of the YedY1-YedZ1 system that may repair oxidized proteins containing methionine sulfoxide residues (Met-O). The chain is Putative protein-methionine-sulfoxide reductase subunit YedZ1 from Azospira oryzae (strain ATCC BAA-33 / DSM 13638 / PS) (Dechlorosoma suillum).